We begin with the raw amino-acid sequence, 334 residues long: MASGTLAPGCRISATEVPGSRPNCHLTSSYFSHRIIPPIPFTPPTVQSTVADPLPQVAKQDSHNWAFDEVLSRWETTSGSAYVPKTHGGPCAQPRAPEPADPTRTVGIKDLGEKLRHRGWRLPLTTKYQSSETRAQYTGSPSGDPRAPEYFGPQPPQLADHHRGGPSQALIAWTKNPELSGRPFTVSDRGVLDRRQLYLTTSARDFRFYPKTELSGYPRKDSLTYWSFEETPQVWSHGPQRPPCPRSSRPPRPPRVRVPRVSPVTSAMPHRGALSLAQESYSPLLHPLRRLDRFCPLEAPWGGPHWKPLRGIYSVPKAYSTENSSYGSLKPALV.

Disordered stretches follow at residues 81–105 (AYVP…PTRT), 128–153 (YQSS…YFGP), and 233–260 (QVWS…RVPR). Residues 128-141 (YQSSETRAQYTGSP) are compositionally biased toward polar residues. Over residues 240–251 (QRPPCPRSSRPP) the composition is skewed to pro residues.

The protein is Stabilizer of axonemal microtubules 3 of Homo sapiens (Human).